The following is a 234-amino-acid chain: Methylamine utilization ferredoxin-type protein MauM (234 aa).

4 consecutive 4Fe-4S ferredoxin-type domains span residues 61–91 (ALAEKDFQSACVRCGLCVEDCPFDILKLASW), 98–131 (GTPFFTARDEPCRMCQDIPCVRACPTGALNPLLT), 140–176 (VAVLVDHETCLNYKGLNCSICVRVCPIRGEAISLKPI), and 184–215 (QIPTVDSTKCTGCGTCEKHCVLSEAAIRVLPR). C71, C74, C77, C81, C109, C112, C117, C121, C149, C157, C160, C164, C193, C196, C199, and C203 together coordinate [4Fe-4S] cluster.

It participates in one-carbon metabolism; methylamine degradation. In terms of biological role, involved in electron transfer. The polypeptide is Methylamine utilization ferredoxin-type protein MauM (mauM) (Methylobacillus flagellatus (strain ATCC 51484 / DSM 6875 / VKM B-1610 / KT)).